The chain runs to 217 residues: Ras-related protein RGP2 (217 aa).

GTP contacts are provided by residues 19-26 (GDSGVGKS), 67-71 (DTAGQ), and 125-128 (NKSD). Residues C214 and C215 are each lipidated (S-geranylgeranyl cysteine).

It belongs to the small GTPase superfamily. Rab family.

The protein localises to the cell membrane. This chain is Ras-related protein RGP2 (RGP2), found in Oryza sativa subsp. japonica (Rice).